The following is a 291-amino-acid chain: ATP synthase gamma chain (291 aa).

It belongs to the ATPase gamma chain family. In terms of assembly, F-type ATPases have 2 components, CF(1) - the catalytic core - and CF(0) - the membrane proton channel. CF(1) has five subunits: alpha(3), beta(3), gamma(1), delta(1), epsilon(1). CF(0) has three main subunits: a, b and c.

Its subcellular location is the cell inner membrane. Functionally, produces ATP from ADP in the presence of a proton gradient across the membrane. The gamma chain is believed to be important in regulating ATPase activity and the flow of protons through the CF(0) complex. The protein is ATP synthase gamma chain of Burkholderia lata (strain ATCC 17760 / DSM 23089 / LMG 22485 / NCIMB 9086 / R18194 / 383).